We begin with the raw amino-acid sequence, 364 residues long: Aminomethyltransferase (364 aa).

It belongs to the GcvT family. In terms of assembly, the glycine cleavage system is composed of four proteins: P, T, L and H.

It carries out the reaction N(6)-[(R)-S(8)-aminomethyldihydrolipoyl]-L-lysyl-[protein] + (6S)-5,6,7,8-tetrahydrofolate = N(6)-[(R)-dihydrolipoyl]-L-lysyl-[protein] + (6R)-5,10-methylene-5,6,7,8-tetrahydrofolate + NH4(+). The glycine cleavage system catalyzes the degradation of glycine. This chain is Aminomethyltransferase, found in Salmonella enteritidis PT4 (strain P125109).